A 288-amino-acid chain; its full sequence is 4-diphosphocytidyl-2-C-methyl-D-erythritol kinase (288 aa).

K8 is a catalytic residue. 92-102 contributes to the ATP binding site; that stretch reads PVAAGMAGGST. Residue D134 is part of the active site.

Belongs to the GHMP kinase family. IspE subfamily.

The catalysed reaction is 4-CDP-2-C-methyl-D-erythritol + ATP = 4-CDP-2-C-methyl-D-erythritol 2-phosphate + ADP + H(+). It participates in isoprenoid biosynthesis; isopentenyl diphosphate biosynthesis via DXP pathway; isopentenyl diphosphate from 1-deoxy-D-xylulose 5-phosphate: step 3/6. In terms of biological role, catalyzes the phosphorylation of the position 2 hydroxy group of 4-diphosphocytidyl-2C-methyl-D-erythritol. The chain is 4-diphosphocytidyl-2-C-methyl-D-erythritol kinase from Clostridium perfringens (strain SM101 / Type A).